The sequence spans 27 residues: Peptide Cn29 (27 aa).

Cystine bridges form between Cys-2–Cys-23, Cys-5–Cys-18, and Cys-12–Cys-25.

As to expression, expressed by the venom gland.

It is found in the secreted. The sequence is that of Peptide Cn29 from Centruroides noxius (Mexican scorpion).